Here is a 280-residue protein sequence, read N- to C-terminus: DNA repair protein XRCC2 (280 aa).

A Phosphoserine modification is found at Ser10.

Belongs to the RecA family. RAD51 subfamily. Interacts with RAD51D. Part of the BCDX2 complex consisting of RAD51B, RAD51C, RAD51D and XRCC2; the complex has a ring-like structure arranged into a flat disk around a central channel. In the absence of DNA, the BCDX2 subcomplex XRCC2:RAD51D formed a multimeric ring structure; in the presence of single-stranded DNA it formed a filamentous structure with the ssDNA.

Its subcellular location is the nucleus. The protein resides in the cytoplasm. It is found in the cytoskeleton. The protein localises to the microtubule organizing center. It localises to the centrosome. Functionally, involved in the homologous recombination repair (HRR) pathway of double-stranded DNA, thought to repair chromosomal fragmentation, translocations and deletions. Part of the RAD51 paralog protein complex BCDX2 which acts in the BRCA1-BRCA2-dependent HR pathway. Upon DNA damage, BCDX2 acts downstream of BRCA2 recruitment and upstream of RAD51 recruitment. BCDX2 binds predominantly to the intersection of the four duplex arms of the Holliday junction and to junction of replication forks. The BCDX2 complex was originally reported to bind single-stranded DNA, single-stranded gaps in duplex DNA and specifically to nicks in duplex DNA. This is DNA repair protein XRCC2 (XRCC2) from Homo sapiens (Human).